Consider the following 747-residue polypeptide: Tegument protein UL46 homolog (747 aa).

Disordered stretches follow at residues 437 to 484 (FCCP…SPRT), 525 to 593 (QRSD…DYMR), 611 to 665 (TPYM…PEVV), and 689 to 747 (SASR…VSSL). The span at 465–484 (LRSSRQLPTSPPSNIVSPRT) shows a compositional bias: polar residues. A compositionally biased stretch (low complexity) spans 528–540 (DSSSSDNSTCSST). Over residues 541–553 (ETQYITLPSTPSP) the composition is skewed to polar residues. Composition is skewed to basic and acidic residues over residues 707 to 724 (VCRERDEESAEPRHDGFI) and 736 to 747 (KHPDQTERVSSL).

It belongs to the herpesviridae HHV-1 VP11/12 protein family.

The protein resides in the virion tegument. It localises to the host cell membrane. Modulates alpha trans-inducing factor-dependent activation of alpha genes. The chain is Tegument protein UL46 homolog from Equine herpesvirus 1 (strain Ab4p) (EHV-1).